Here is a 370-residue protein sequence, read N- to C-terminus: D-alanine--D-alanine ligase (370 aa).

Positions 144 to 352 constitute an ATP-grasp domain; it reads KKIFADAGIP…YGALIERLVD (209 aa). 177-232 contributes to the ATP binding site; it reads EEVLTYPVFVKPANLGSSVGISKATNKTELIEAMTEAFLYDRRVVVEQGVVAREIE. Aspartate 306, glutamate 319, and asparagine 321 together coordinate Mg(2+).

This sequence belongs to the D-alanine--D-alanine ligase family. Mg(2+) serves as cofactor. The cofactor is Mn(2+).

It localises to the cytoplasm. It carries out the reaction 2 D-alanine + ATP = D-alanyl-D-alanine + ADP + phosphate + H(+). It participates in cell wall biogenesis; peptidoglycan biosynthesis. Its function is as follows. Cell wall formation. The chain is D-alanine--D-alanine ligase from Listeria innocua serovar 6a (strain ATCC BAA-680 / CLIP 11262).